The primary structure comprises 211 residues: Ferritin heavy chain (211 aa).

An N-terminal signal peptide occupies residues 1 to 20; that stretch reads MNSILLVFAGILAVCLPASA. Residues 35–191 enclose the Ferritin-like diiron domain; sequence ITMHRSCRNS…GKASTLKKLM (157 aa). An intrachain disulfide couples Cys41 to Cys150. 5 residues coordinate Fe cation: Glu52, Glu87, His90, Glu136, and Gln173.

Belongs to the ferritin family. In terms of assembly, oligomer of 12 light (L) chains and 12 heavy (H) chains; L and H chains are disulfide-linked. The functional molecule forms a roughly spherical shell with a diameter of 12 nm and contains a central cavity into which the insoluble ferric iron core is deposited.

It is found in the golgi apparatus. Its subcellular location is the secreted. The catalysed reaction is 4 Fe(2+) + O2 + 4 H(+) = 4 Fe(3+) + 2 H2O. Stores iron in a soluble, non-toxic, readily available form. Important for iron homeostasis. Iron is taken up in the ferrous form and deposited as ferric hydroxides after oxidation. Ferritin is composed of a heavy (H) chain which is responsible for the oxidation and uptake of ferrous iron, and a light (L) chain which facilitates the nucleation of the ferrihydrite iron core. The chain is Ferritin heavy chain from Trichoplusia ni (Cabbage looper).